Reading from the N-terminus, the 458-residue chain is UDP-N-acetylmuramate--L-alanine ligase (458 aa).

Position 119 to 125 (119 to 125) interacts with ATP; sequence GTHGKTT.

It belongs to the MurCDEF family.

It localises to the cytoplasm. The enzyme catalyses UDP-N-acetyl-alpha-D-muramate + L-alanine + ATP = UDP-N-acetyl-alpha-D-muramoyl-L-alanine + ADP + phosphate + H(+). The protein operates within cell wall biogenesis; peptidoglycan biosynthesis. Functionally, cell wall formation. In Phocaeicola vulgatus (strain ATCC 8482 / DSM 1447 / JCM 5826 / CCUG 4940 / NBRC 14291 / NCTC 11154) (Bacteroides vulgatus), this protein is UDP-N-acetylmuramate--L-alanine ligase.